The primary structure comprises 877 residues: Phosphoenolpyruvate carboxylase (877 aa).

Catalysis depends on residues H138 and K544.

It belongs to the PEPCase type 1 family. It depends on Mg(2+) as a cofactor.

It catalyses the reaction oxaloacetate + phosphate = phosphoenolpyruvate + hydrogencarbonate. Its function is as follows. Forms oxaloacetate, a four-carbon dicarboxylic acid source for the tricarboxylic acid cycle. This chain is Phosphoenolpyruvate carboxylase, found in Vibrio vulnificus (strain CMCP6).